Here is a 404-residue protein sequence, read N- to C-terminus: Queuine tRNA-ribosyltransferase catalytic subunit (404 aa).

Asp-98 functions as the Proton acceptor in the catalytic mechanism. Residues 98 to 102, Asp-152, Gln-195, and Gly-222 contribute to the substrate site; that span reads DSGGF. Residues 253–259 are RNA binding; the sequence is GVGYAED. The active-site Nucleophile is Asp-272. The interval 277-281 is RNA binding; important for wobble base 34 recognition; it reads TRTAR. The Zn(2+) site is built by Cys-310, Cys-312, Cys-315, and His-347.

It belongs to the queuine tRNA-ribosyltransferase family. Heterodimer of a catalytic subunit and an accessory subunit. Zn(2+) is required as a cofactor.

Its subcellular location is the cytoplasm. It localises to the nucleus. The catalysed reaction is guanosine(34) in tRNA + queuine = queuosine(34) in tRNA + guanine. Its function is as follows. Catalytic subunit of the queuine tRNA-ribosyltransferase (TGT) that catalyzes the base-exchange of a guanine (G) residue with queuine (Q) at position 34 (anticodon wobble position) in tRNAs with GU(N) anticodons (tRNA-Asp, -Asn, -His and -Tyr), resulting in the hypermodified nucleoside queuosine (7-(((4,5-cis-dihydroxy-2-cyclopenten-1-yl)amino)methyl)-7-deazaguanosine). Catalysis occurs through a double-displacement mechanism. The nucleophile active site attacks the C1' of nucleotide 34 to detach the guanine base from the RNA, forming a covalent enzyme-RNA intermediate. The proton acceptor active site deprotonates the incoming queuine, allowing a nucleophilic attack on the C1' of the ribose to form the product. This Schizosaccharomyces pombe (strain 972 / ATCC 24843) (Fission yeast) protein is Queuine tRNA-ribosyltransferase catalytic subunit.